The following is a 492-amino-acid chain: Putative heme-binding protein VNG_2021C (492 aa).

Position 177 (His177) interacts with heme. The disordered stretch occupies residues 253-301; that stretch reads AGERVPAPEGGADAHGEGERTHHHGDSDHHDGDDGEQHHHSTGDEADDG. Residues 264-301 are compositionally biased toward basic and acidic residues; sequence ADAHGEGERTHHHGDSDHHDGDDGEQHHHSTGDEADDG. The 89-residue stretch at 402–490 folds into the ABM domain; sequence GTMGMFYETK…VLADRPRHVF (89 aa).

This sequence in the N-terminal section; belongs to the ChdC family.

The protein is Putative heme-binding protein VNG_2021C of Halobacterium salinarum (strain ATCC 700922 / JCM 11081 / NRC-1) (Halobacterium halobium).